We begin with the raw amino-acid sequence, 252 residues long: NDR1/HIN1-like protein 6 (252 aa).

Residues 1-46 (MSQHQKIYPVQDPEAATARPTAPLVPRGSSRSEHGDPSKVPLNQRP) form a disordered region. Residues 70–90 (FCFLLLLVVAVGASIGILYLV) traverse the membrane as a helical segment. N-linked (GlcNAc...) asparagine glycosylation is found at Asn121, Asn154, Asn166, and Asn180.

As to quaternary structure, homodimer. As to expression, highly expressed in seeds and at lower level in roots and senescing leaves. Expressed in leaves and flowers.

It localises to the cell membrane. Its subcellular location is the cytoplasm. The protein resides in the cytosol. Its function is as follows. Plays an important role in the abiotic stresses-induced abscisic acid (ABA) signaling and biosynthesis. Acts as a positive regulator of ABA-mediated seed germination inhibition. Functions downstream of ABF2/AREB1, ABF4/AREB2 and ABF3. The chain is NDR1/HIN1-like protein 6 from Arabidopsis thaliana (Mouse-ear cress).